The primary structure comprises 401 residues: Calcium-responsive transcription coactivator (401 aa).

Residues 1-148 (MSVAFASARP…TLPTTSMSMS (148 aa)) form an N-terminal auto-inhibitory domain; necessary for interaction with SMARCA4/BRG1 region. The SH2-binding signature appears at 50–53 (YQQI). Disordered stretches follow at residues 72 to 171 (QSLL…VPMQ) and 214 to 401 (TRAR…NYQQ). Residues 85 to 106 (LGPGALSQSGSSQGLHPQGSLS) show a composition bias toward low complexity. Polar residues predominate over residues 128-137 (NHVSMQQTAQ). A compositionally biased stretch (low complexity) spans 138–149 (STLPTTSMSMSG). A methionine-rich intra-molecular domain region spans residues 149 to 237 (GSGHGTGPGY…GGSMMGQRPM (89 aa)). The MFD domain stretch occupies residues 251-322 (YLGQEEYYSE…SQYSQQQAGY (72 aa)). Composition is skewed to polar residues over residues 260–276 (EQYS…SQQY) and 285–294 (AYQQSSYTEQ). A compositionally biased stretch (basic and acidic residues) spans 295–304 (SYDRSFEDPT). The span at 310–374 (GGNSQYSQQQ…QGQGQQYGSY (65 aa)) shows a compositional bias: low complexity. The segment at 339-401 (NQQSYPGQQQ…EQGQYGNYQQ (63 aa)) is necessary for nuclear localization. The SH2-binding motif lies at 358–361 (SQYS). Residues 375–387 (RTSQTGPSAQQQR) show a composition bias toward polar residues. Residues 376–384 (TSQTGPSAQ) carry the SH3-binding motif. Low complexity predominate over residues 389-401 (YGYEQGQYGNYQQ). Residues 392–401 (EQGQYGNYQQ) form a necessary for interaction with CREBBP and for the recruitment of CREBBP to the nuclear bodies region. The SH2-binding signature appears at 396 to 399 (YGNY).

The protein belongs to the SS18 family. In terms of assembly, homodimer. Dimerization may be necessary for its function in neuronal dendritic development. Interacts (via C-terminus) with CREBBP (via N-terminus), EP300 and SMARCA4/BRG1. Interacts with the nBAF complex. Association with CREBBP facilitates transcription while the association with SMARCA4/BRG1 suppresses CREST-mediated transcription in resting neurons. In terms of tissue distribution, brain (at protein level). Also found in the heart, liver, kidney and testis.

The protein localises to the nucleus. It localises to the chromosome. The protein resides in the centromere. Its subcellular location is the kinetochore. Functionally, transcriptional activator which is required for calcium-dependent dendritic growth and branching in cortical neurons. Recruits CREB-binding protein (CREBBP) to nuclear bodies. Component of the CREST-BRG1 complex, a multiprotein complex that regulates promoter activation by orchestrating a calcium-dependent release of a repressor complex and a recruitment of an activator complex. In resting neurons, transcription of the c-FOS promoter is inhibited by BRG1-dependent recruitment of a phospho-RB1-HDAC1 repressor complex. Upon calcium influx, RB1 is dephosphorylated by calcineurin, which leads to release of the repressor complex. At the same time, there is increased recruitment of CREBBP to the promoter by a CREST-dependent mechanism, which leads to transcriptional activation. The CREST-BRG1 complex also binds to the NR2B promoter, and activity-dependent induction of NR2B expression involves a release of HDAC1 and recruitment of CREBBP. This Rattus norvegicus (Rat) protein is Calcium-responsive transcription coactivator (Ss18l1).